The sequence spans 899 residues: Probable dipeptidyl-aminopeptidase B (899 aa).

Residues 1–69 (MKLDRMRVGS…NHNGRTQGNY (69 aa)) are disordered. Residues 1-99 (MKLDRMRVGS…NGKSSQRRTL (99 aa)) are Cytoplasmic-facing. Residues 32–43 (DSSSTASISLTL) are compositionally biased toward low complexity. Residues 100-120 (IVFWLLVALCVGGWAVAFLFF) form a helical; Signal-anchor for type II membrane protein membrane-spanning segment. The Vacuolar segment spans residues 121–899 (VTSPGNKTST…KYFNLSFLGH (779 aa)). The segment covering 128–139 (TSTSPHSGSNSP) has biased composition (polar residues). The tract at residues 128–149 (TSTSPHSGSNSPEGDVTKPGIP) is disordered. N-linked (GlcNAc...) asparagine glycans are attached at residues N212, N308, and N360. Residue S765 is the Charge relay system of the active site. N-linked (GlcNAc...) asparagine glycosylation is found at N819, N824, and N827. Catalysis depends on charge relay system residues D842 and H875. N893 carries an N-linked (GlcNAc...) asparagine glycan.

This sequence belongs to the peptidase S9B family.

It localises to the vacuole membrane. The enzyme catalyses Release of an N-terminal dipeptide, Xaa-Yaa-|-Zaa-, from a polypeptide, preferentially when Yaa is Pro, provided Zaa is neither Pro nor hydroxyproline.. In terms of biological role, type IV dipeptidyl-peptidase which removes N-terminal dipeptides sequentially from polypeptides having unsubstituted N-termini provided that the penultimate residue is proline. The polypeptide is Probable dipeptidyl-aminopeptidase B (DAPB) (Trichophyton verrucosum (strain HKI 0517)).